A 128-amino-acid chain; its full sequence is MRFAIVVTGPAYGTQQASSAFQFAQALIVEGHELSSVFFYRGGVYNANQLTSPASDEFDLVRGWQQLNAQHGVALNICVAAALRRGIVDETEAGRLGLASSNLQPGFTLSGLGALAEASLTCDRVVQF.

C78 functions as the Cysteine persulfide intermediate in the catalytic mechanism.

The protein belongs to the DsrE/TusD family. In terms of assembly, heterohexamer, formed by a dimer of trimers. The hexameric TusBCD complex contains 2 copies each of TusB, TusC and TusD. The TusBCD complex interacts with TusE.

Its subcellular location is the cytoplasm. Its function is as follows. Part of a sulfur-relay system required for 2-thiolation of 5-methylaminomethyl-2-thiouridine (mnm(5)s(2)U) at tRNA wobble positions. Accepts sulfur from TusA and transfers it in turn to TusE. The protein is Sulfurtransferase TusD of Shigella boydii serotype 18 (strain CDC 3083-94 / BS512).